A 573-amino-acid chain; its full sequence is DNA damage-binding protein CMR1 (573 aa).

The disordered stretch occupies residues 27 to 94 (DSLNDSISRE…EMEKAEERKR (68 aa)). The stretch at 72 to 152 (TMEDSEEDKQ…EEIKKEEDST (81 aa)) forms a coiled coil. Over residues 79 to 94 (DKQMREEMEKAEERKR) the composition is skewed to basic and acidic residues. WD repeat units lie at residues 218–259 (ITQQ…DDET), 268–308 (PHGK…STEV), 319–357 (DYPL…KQGE), 361–401 (LHDK…QKNS), 418–456 (HSRL…KLPL), 495–538 (GRWV…LCHL), and 542–573 (DRMT…YLFE).

The protein belongs to the WD repeat DDB2/WDR76 family.

DNA-binding protein that binds to both single- and double-stranded DNA. Binds preferentially to UV-damaged DNA. May be involved in DNA-metabolic processes. The sequence is that of DNA damage-binding protein CMR1 from Meyerozyma guilliermondii (strain ATCC 6260 / CBS 566 / DSM 6381 / JCM 1539 / NBRC 10279 / NRRL Y-324) (Yeast).